A 216-amino-acid chain; its full sequence is Peptide methionine sulfoxide reductase MsrA (216 aa).

Cys54 is an active-site residue.

Belongs to the MsrA Met sulfoxide reductase family.

It carries out the reaction L-methionyl-[protein] + [thioredoxin]-disulfide + H2O = L-methionyl-(S)-S-oxide-[protein] + [thioredoxin]-dithiol. The enzyme catalyses [thioredoxin]-disulfide + L-methionine + H2O = L-methionine (S)-S-oxide + [thioredoxin]-dithiol. In terms of biological role, has an important function as a repair enzyme for proteins that have been inactivated by oxidation. Catalyzes the reversible oxidation-reduction of methionine sulfoxide in proteins to methionine. This chain is Peptide methionine sulfoxide reductase MsrA, found in Xylella fastidiosa (strain Temecula1 / ATCC 700964).